The sequence spans 201 residues: Recombination protein RecR (201 aa).

A C4-type zinc finger spans residues 60-75 (CSTCGNVDTADPCMIC). Residues 83–178 (GTIIVVEDVS…KVTRLAHGVP (96 aa)) enclose the Toprim domain.

Belongs to the RecR family.

May play a role in DNA repair. It seems to be involved in an RecBC-independent recombinational process of DNA repair. It may act with RecF and RecO. The polypeptide is Recombination protein RecR (Mesorhizobium japonicum (strain LMG 29417 / CECT 9101 / MAFF 303099) (Mesorhizobium loti (strain MAFF 303099))).